The following is a 65-amino-acid chain: uncharacterized protein (65 aa).

Residues 1-65 (MIALSVCWQI…ETGIGYRFML (65 aa)) constitute a DNA-binding region (ompR/PhoB-type).

This is an uncharacterized protein from Escherichia coli (strain K12).